We begin with the raw amino-acid sequence, 546 residues long: Hexose oxidase (546 aa).

The region spanning 40 to 222 (IGTNIDFVYV…TKYYFKDLPM (183 aa)) is the FAD-binding PCMH-type domain. The 6-(S-cysteinyl)-8alpha-(pros-histidyl)-FAD (His-Cys) cross-link spans 79–138 (HCYEDFVFDECVKAIINVTGLVESGYDDDRGYFVSSGDTNWGSFKTLFRDHGRVLPGGSC). 2 N-linked (GlcNAc...) asparagine glycosylation sites follow: Asn-95 and Asn-358.

The protein belongs to the oxygen-dependent FAD-linked oxidoreductase family. As to quaternary structure, homodimer. Requires FAD as cofactor. Cleaved into 40 kDa and 29 kDa cleavage products, but the 2 polypeptide chains do not separate and seem to be physically linked together. In terms of processing, the FAD cofactor is bound via a bicovalent 6-S-cysteinyl, 8alpha-N1-histidyl FAD linkage.

The enzyme catalyses beta-D-glucose + O2 = D-glucono-1,5-lactone + H2O2. The catalysed reaction is D-galactose + O2 = D-galactono-1,5-lactone + H2O2. It carries out the reaction D-maltose + O2 = D-maltobiono-1,5-lactone + H2O2. It catalyses the reaction D-cellobiose + O2 = D-cellobiono-1,5-lactone + H2O2. The enzyme catalyses beta-lactose + O2 = lactobiono-1,5-lactone + H2O2. In terms of biological role, catalyzes the selective oxidation of C1 hydroxyl moieties on mono- and disaccharides with concomitant reduction of molecular oxygen to hydrogen peroxide. This results in the formation of the corresponding lactones, which typically undergo spontaneous hydrolysis. Hexose oxidase is able to oxidize a variety of substrates including D-glucose, D-galactose, maltose, cellobiose, and lactose. The polypeptide is Hexose oxidase (HOX) (Chondrus crispus (Carrageen Irish moss)).